The chain runs to 530 residues: Ubiquitin carboxyl-terminal hydrolase 17 (530 aa).

Positions Ala80 to Lys375 constitute a USP domain. The Nucleophile role is filled by Cys89. The active-site Proton acceptor is His334. 2 stretches are compositionally biased toward basic and acidic residues: residues Ser382 to Arg392 and Asp398 to Pro413. 2 disordered regions span residues Ser382–Gln416 and Ser490–Gln530. Residues Thr399–Gln530 are mediates interaction with SUDS3. Polar residues predominate over residues Glu498–Gly510. Residues Arg511–Arg524 are compositionally biased toward basic residues.

The protein belongs to the peptidase C19 family. USP17 subfamily. Interacts with SUDS3; the interaction is direct. Broadly expressed.

The protein localises to the nucleus. The protein resides in the endoplasmic reticulum. It carries out the reaction Thiol-dependent hydrolysis of ester, thioester, amide, peptide and isopeptide bonds formed by the C-terminal Gly of ubiquitin (a 76-residue protein attached to proteins as an intracellular targeting signal).. Functionally, deubiquitinating enzyme that removes conjugated ubiquitin from specific proteins to regulate different cellular processes. Regulates cell proliferation by deubiquitinating and inhibiting RCE1 thereby controlling the small GTPases NRAS and HRAS localization and activation. In parallel, mediates deubiquitination of CDC25A, preventing CDC25A degradation by the proteasome during the G1/S and G2/M phases promoting cell-cycle progression. Also regulates cell proliferation and apoptosis through deubiquitination of SUDS3 a regulator of histone deacetylation. Through activation of the Rho family GTPases RAC1A, CDC42 and RHOA, regulates cell migration. Through the cleavage of 'Lys-48'- and 'Lys-63'-linked polyubiquitin chains of the cytoplasmic innate immune receptors RIGI and IFIH1 stimulates the cellular response to viral infection. The protein is Ubiquitin carboxyl-terminal hydrolase 17 (USP17L2) of Homo sapiens (Human).